Here is a 2153-residue protein sequence, read N- to C-terminus: Non-reducing polyketide synthase albA (2153 aa).

Residues 8-244 are N-terminal acylcarrier protein transacylase domain (SAT); that stretch reads YLFGDQTSDI…VKAPIHGPYH (237 aa). Residues 375-806 enclose the Ketosynthase family 3 (KS3) domain; it reads NSKIAIIGMS…GGNTALLLED (432 aa). Residues C547, H682, and H724 each act as for beta-ketoacyl synthase activity in the active site. A malonyl-CoA:ACP transacylase (MAT) domain region spans residues 912 to 1232; sequence FVFTGQGAQY…LASLHLAGID (321 aa). S1001 serves as the catalytic For acyl/malonyl transferase activity. The interval 1286–1425 is N-terminal hotdog fold; the sequence is HEYLTTAAQK…CTVRFFDCAA (140 aa). In terms of domain architecture, PKS/mFAS DH spans 1286 to 1598; the sequence is HEYLTTAAQK…FQALSRKILD (313 aa). The interval 1290–1603 is product template (PT) domain; that stretch reads TTAAQKVIET…RKILDTVLPP (314 aa). H1326 serves as the catalytic Proton acceptor; for dehydratase activity. Residues 1452 to 1598 are C-terminal hotdog fold; that stretch reads DAHRLGRGMV…FQALSRKILD (147 aa). D1511 acts as the Proton donor; for dehydratase activity in catalysis. The interval 1608 to 1643 is disordered; that stretch reads KGPARPAASAQKAAPAAAASKSRASAPAPAKPAAKP. The segment covering 1610–1643 has biased composition (low complexity); the sequence is PARPAASAQKAAPAAAASKSRASAPAPAKPAAKP. A Carrier 1 domain is found at 1643–1720; sequence PSAPSLVKRA…DFKQFLAPMS (78 aa). At S1680 the chain carries O-(pantetheine 4'-phosphoryl)serine. Residues 1720–1765 are disordered; sequence SQGEASDGSTSDPESSSSFNGGSSTDESSAGSPVSSPPNEKVTQVE. The span at 1725–1748 shows a compositional bias: low complexity; sequence SDGSTSDPESSSSFNGGSSTDESS. A compositionally biased stretch (polar residues) spans 1749–1765; sequence AGSPVSSPPNEKVTQVE. One can recognise a Carrier 2 domain in the interval 1764 to 1841; sequence VEQHATIKEI…DVEDALGLKP (78 aa). O-(pantetheine 4'-phosphoryl)serine is present on S1801. A claisen cyclase domain region spans residues 1879–2151; it reads SPHPRSTSIL…ELGSFIGNAM (273 aa). S1969 acts as the For Claisen cyclase activity in catalysis.

The enzyme catalyses 6 malonyl-CoA + acetyl-CoA + 6 H(+) = naphtopyrone YWA1 + 6 CO2 + 7 CoA + H2O. It functions in the pathway secondary metabolite biosynthesis. Its function is as follows. Non-reducing polyketide synthase; part of the gene cluster that mediates the biosynthesis of aurasperone B, a dimeric gamma-naphthopyrone. The first step in the biosynthesis of aurasperone B is the production of gamma-naphthopyrone precursor YWA1 by the non-reducing polyketide synthase albA, via condensation of one acetyl-CoA starter unit with 6 malonyl-CoA units. YWA1 is then methylated by aunE at position C-6 to yield foncesin which is further methylated at position C-8 by aunD to produce fonsecin B. A key enzyme in the biosynthetic pathway is the cytochrome P450 monooxygenase aunB which catalyzes the oxidative dimerization of fonsecin B to aurasperone B. AunB also catalyzes the oxidative dimerization of rubrofusarin B into aurasperone A. This chain is Non-reducing polyketide synthase albA, found in Aspergillus niger (strain ATCC MYA-4892 / CBS 513.88 / FGSC A1513).